Consider the following 416-residue polypeptide: Probable intermembrane transport protein HI_1671 (416 aa).

Transmembrane regions (helical) follow at residues 62–82 (ILIL…LLGI), 107–127 (IFIC…MLWL), 138–158 (VLLF…LVAL), 172–192 (EINI…LLFI), 263–283 (LIAG…GIYL), 306–326 (FVAF…IFIM), 347–367 (LLHL…VLAL), and 377–397 (IINF…FCTM).

Belongs to the PqiA family.

Its subcellular location is the cell inner membrane. In Haemophilus influenzae (strain ATCC 51907 / DSM 11121 / KW20 / Rd), this protein is Probable intermembrane transport protein HI_1671.